Here is a 150-residue protein sequence, read N- to C-terminus: Arginine repressor (150 aa).

The protein belongs to the ArgR family.

It is found in the cytoplasm. The protein operates within amino-acid biosynthesis; L-arginine biosynthesis [regulation]. Regulates arginine biosynthesis genes. The protein is Arginine repressor of Desulforudis audaxviator (strain MP104C).